Here is a 618-residue protein sequence, read N- to C-terminus: DNA mismatch repair protein MutL (618 aa).

The span at 367 to 381 (EPTAAREPATPRYSG) shows a compositional bias: low complexity. Residues 367–402 (EPTAAREPATPRYSGGASGGNGGRQSAGGWPHAQPG) form a disordered region. Gly residues predominate over residues 382 to 392 (GASGGNGGRQS).

It belongs to the DNA mismatch repair MutL/HexB family.

This protein is involved in the repair of mismatches in DNA. It is required for dam-dependent methyl-directed DNA mismatch repair. May act as a 'molecular matchmaker', a protein that promotes the formation of a stable complex between two or more DNA-binding proteins in an ATP-dependent manner without itself being part of a final effector complex. In Salmonella heidelberg (strain SL476), this protein is DNA mismatch repair protein MutL.